Here is an 800-residue protein sequence, read N- to C-terminus: Phenylalanine--tRNA ligase beta subunit (800 aa).

The tRNA-binding domain maps to 39 to 154; that stretch reads TKDIKNLVVG…ESQVPGTDAL (116 aa). In terms of domain architecture, B5 spans 408 to 483; sequence AFITPIDITA…RIYGYDDIPS (76 aa). Asp461, Asp467, Glu470, and Glu471 together coordinate Mg(2+). The 93-residue stretch at 708–800 folds into the FDX-ACB domain; the sequence is PRFPGMSRDI…ALIEQGAVIR (93 aa).

Belongs to the phenylalanyl-tRNA synthetase beta subunit family. Type 1 subfamily. As to quaternary structure, tetramer of two alpha and two beta subunits. Mg(2+) is required as a cofactor.

The protein resides in the cytoplasm. It carries out the reaction tRNA(Phe) + L-phenylalanine + ATP = L-phenylalanyl-tRNA(Phe) + AMP + diphosphate + H(+). The polypeptide is Phenylalanine--tRNA ligase beta subunit (Staphylococcus aureus).